Reading from the N-terminus, the 568-residue chain is Glucose-6-phosphate isomerase, cytosolic 1 (568 aa).

Glu-360 acts as the Proton donor in catalysis. Active-site residues include His-391 and Lys-516.

This sequence belongs to the GPI family. In terms of assembly, homodimer.

The protein localises to the cytoplasm. It carries out the reaction alpha-D-glucose 6-phosphate = beta-D-fructose 6-phosphate. It participates in carbohydrate degradation; glycolysis; D-glyceraldehyde 3-phosphate and glycerone phosphate from D-glucose: step 2/4. This chain is Glucose-6-phosphate isomerase, cytosolic 1 (PGIC1), found in Clarkia xantiana (Gunsight clarkia).